The primary structure comprises 339 residues: Glucokinase (339 aa).

Residue 16-21 (GDIGGT) participates in ATP binding.

Belongs to the bacterial glucokinase family.

It is found in the cytoplasm. The enzyme catalyses D-glucose + ATP = D-glucose 6-phosphate + ADP + H(+). This Rhizobium meliloti (strain 1021) (Ensifer meliloti) protein is Glucokinase.